A 316-amino-acid chain; its full sequence is Small ribosomal subunit protein RACK1 (316 aa).

WD repeat units follow at residues 4–46, 52–93, 94–135, 137–180, 181–221, 222–263, and 264–312; these read QMTL…WRLT, YGVP…WDLS, TGQT…WNTL, VCKY…WNLT, NCKL…LWDL, NEGK…WDLE, and GKVV…WQVS.

The protein belongs to the WD repeat G protein beta family. Ribosomal protein RACK1 subfamily.

The protein is Small ribosomal subunit protein RACK1 of Biomphalaria glabrata (Bloodfluke planorb).